We begin with the raw amino-acid sequence, 455 residues long: Exodeoxyribonuclease 7 large subunit (455 aa).

This sequence belongs to the XseA family. As to quaternary structure, heterooligomer composed of large and small subunits.

The protein resides in the cytoplasm. It carries out the reaction Exonucleolytic cleavage in either 5'- to 3'- or 3'- to 5'-direction to yield nucleoside 5'-phosphates.. In terms of biological role, bidirectionally degrades single-stranded DNA into large acid-insoluble oligonucleotides, which are then degraded further into small acid-soluble oligonucleotides. The polypeptide is Exodeoxyribonuclease 7 large subunit (Escherichia coli (strain SMS-3-5 / SECEC)).